Here is a 523-residue protein sequence, read N- to C-terminus: MSDEQSSWRSKLLLICQQTRSSSESIHFAALKDHHARLQACESMEKAMKERCQKKITMSRRTKRGITHAGYLFEMPHNSVFEPECRGFYESCQQTEMASSDLQAPALEVSSTYPVQQAVKSRPEGQFPESRNNSTKKIDAQQYSSESSSQSGFGFRTAREQLIMDELKKKNRQATSEVDAVPTGMMNFRKKTLGGKRTVSSNFVSPVAQNDNSTSSRSSSIPPALAHLDSKMVDHILGESMHDFKPVAWEDIAGLESAKSTFLEAIIMPLRRPDLFTGVRCPPRGVLLFGPPGTGKTLIAKSIASQAKAKFFSINPSSLTSKWVGDAEKLVKTLFAVAAAHQPAIIFIDEVDSLLSKRSANENESTLRLKNEFLIHLDGAASNEEIRVLVIGATNRPQELDEAVRRRFVRRLYVPLPTREARQKIIEKLIHQVKHNLDVRQVIELAELTDGYSGADVDTLCRYASMAPLRSLTPDQMEVIETHQLPAVTMDDFKQALRVISKSVSSEDCKQFEAWNEIYGVRH.

The disordered stretch occupies residues 114-154; it reads PVQQAVKSRPEGQFPESRNNSTKKIDAQQYSSESSSQSGFG. A compositionally biased stretch (low complexity) spans 141-151; the sequence is QQYSSESSSQS. ATP-binding positions include A253 and 293–298; that span reads GTGKTL.

It belongs to the AAA ATPase family. In terms of assembly, hexamer. Requires Mg(2+) as cofactor.

The enzyme catalyses ATP + H2O = ADP + phosphate + H(+). The protein is Fidgetin-like protein 1 of Drosophila melanogaster (Fruit fly).